The sequence spans 153 residues: Ribosome maturation factor RimP (153 aa).

The protein belongs to the RimP family.

It localises to the cytoplasm. Its function is as follows. Required for maturation of 30S ribosomal subunits. The sequence is that of Ribosome maturation factor RimP from Burkholderia mallei (strain NCTC 10229).